A 62-amino-acid polypeptide reads, in one-letter code: Small ribosomal subunit protein eS30z/eS30y/eS30x (62 aa).

The tract at residues 1–38 (MGKVHGSLARAGKVRGQTPKVAKQDKKKKPRGRAHKRL) is disordered. Basic residues predominate over residues 25-38 (DKKKKPRGRAHKRL).

This sequence belongs to the eukaryotic ribosomal protein eS30 family.

This chain is Small ribosomal subunit protein eS30z/eS30y/eS30x (RPS30A), found in Arabidopsis thaliana (Mouse-ear cress).